The chain runs to 792 residues: Phenylalanine--tRNA ligase beta subunit (792 aa).

Residues 39–154 (LYSFASVITA…EATPLGEDLA (116 aa)) enclose the tRNA-binding domain. A B5 domain is found at 403 to 480 (RELKEVALRP…ESWNIETQNP (78 aa)). The Mg(2+) site is built by aspartate 456, aspartate 462, glutamate 465, and glutamate 466. The FDX-ACB domain maps to 695 to 791 (AIYPSSFRDL…LLTDTKGTIN (97 aa)).

The protein belongs to the phenylalanyl-tRNA synthetase beta subunit family. Type 1 subfamily. In terms of assembly, tetramer of two alpha and two beta subunits. It depends on Mg(2+) as a cofactor.

It is found in the cytoplasm. The enzyme catalyses tRNA(Phe) + L-phenylalanine + ATP = L-phenylalanyl-tRNA(Phe) + AMP + diphosphate + H(+). This chain is Phenylalanine--tRNA ligase beta subunit (pheT), found in Chlamydia pneumoniae (Chlamydophila pneumoniae).